A 438-amino-acid polypeptide reads, in one-letter code: Beta-1,3-galactosyl-O-glycosyl-glycoprotein beta-1,6-N-acetylglucosaminyltransferase 3 (438 aa).

Residues 1–6 (MVQWKR) lie on the Cytoplasmic side of the membrane. Residues 7 to 26 (LCQLHYLWALGCYMLLATVA) form a helical; Signal-anchor for type II membrane protein membrane-spanning segment. The Lumenal portion of the chain corresponds to 27–438 (LKLSFRLKCD…RYKAIYGTEL (412 aa)). Cystine bridges form between cysteine 70–cysteine 227, cysteine 161–cysteine 382, cysteine 182–cysteine 209, and cysteine 391–cysteine 423. An N-linked (GlcNAc...) asparagine glycan is attached at asparagine 289.

This sequence belongs to the glycosyltransferase 14 family. Post-translationally, N-glycosylated. As to expression, primarily expressed in mucus-secreting tissues. Expressed in colon, kidney, small intestine, trachea, and stomach, where mucin is produced.

The protein resides in the golgi apparatus membrane. It catalyses the reaction a 3-O-[beta-D-galactosyl-(1-&gt;3)-N-acetyl-alpha-D-galactosaminyl]-L-seryl-[protein] + UDP-N-acetyl-alpha-D-glucosamine = 3-O-{beta-D-galactosyl-(1-&gt;3)-[N-acetyl-beta-D-glucosaminyl-(1-&gt;6)]-N-acetyl-alpha-D-galactosaminyl}-L-seryl-[protein] + UDP + H(+). The enzyme catalyses a 3-O-[beta-D-galactosyl-(1-&gt;3)-N-acetyl-alpha-D-galactosaminyl]-L-threonyl-[protein] + UDP-N-acetyl-alpha-D-glucosamine = a 3-O-{beta-D-galactosyl-(1-&gt;3)-[N-acetyl-beta-D-glucosaminyl-(1-&gt;6)]-N-acetyl-alpha-D-galactosaminyl}-L-threonyl-[protein] + UDP + H(+). The catalysed reaction is a beta-D-Gal-(1-&gt;4)-beta-D-GlcNAc-(1-&gt;3)-beta-D-Gal-(1-&gt;4)-beta-D-GlcNAc derivative + UDP-N-acetyl-alpha-D-glucosamine = a beta-D-Gal-(1-&gt;4)-beta-D-GlcNAc-(1-&gt;3)-[beta-D-GlcNAc-(1-&gt;6)]-beta-D-Gal-(1-&gt;4)-N-acetyl-beta-D-glucosaminyl derivative + UDP + H(+). It carries out the reaction 3-O-[N-acetyl-beta-D-glucosaminyl-(1-&gt;3)-N-acetyl-alpha-D-galactosaminyl]-L-seryl-[protein] + UDP-N-acetyl-alpha-D-glucosamine = 3-O-[N-acetyl-beta-D-glucosaminyl-(1-&gt;3)-[N-acetyl-beta-D-glucosaminyl-(1-&gt;6)]-N-acetyl-alpha-D-galactosaminyl]-L-seryl-[protein] + UDP + H(+). It catalyses the reaction a 3-O-[N-acetyl-beta-D-glucosaminyl-(1-&gt;3)-N-acetyl-alpha-D-galactosaminyl]-L-threonyl-[protein] + UDP-N-acetyl-alpha-D-glucosamine = 3-O-[N-acetyl-beta-D-glucosaminyl-(1-&gt;3)-[N-acetyl-beta-D-glucosaminyl-(1-&gt;6)]-N-acetyl-alpha-D-galactosaminyl]-L-threonyl-[protein] + UDP + H(+). It participates in protein modification; protein glycosylation. Its function is as follows. Glycosyltransferase that can synthesize all known mucin beta 6 N-acetylglucosaminides. Mediates core 2 and core 4 O-glycan branching, 2 important steps in mucin-type biosynthesis. Also has I-branching enzyme activity by converting linear into branched poly-N-acetyllactosaminoglycans, leading to introduce the blood group I antigen during embryonic development. The sequence is that of Beta-1,3-galactosyl-O-glycosyl-glycoprotein beta-1,6-N-acetylglucosaminyltransferase 3 (GCNT3) from Homo sapiens (Human).